A 485-amino-acid polypeptide reads, in one-letter code: Calcium-dependent protein kinase 27 (485 aa).

Residue glycine 2 is the site of N-myristoyl glycine attachment. Residues 28-290 (YILGEELGRG…AAEVLGHPWM (263 aa)) form the Protein kinase domain. Residues 34–42 (LGRGNFGLT) and lysine 57 contribute to the ATP site. Aspartate 156 functions as the Proton acceptor in the catalytic mechanism. Serine 196 carries the post-translational modification Phosphoserine. Residues 295 to 325 (ASDKPIDGVVLSRLKRFRDANKFKKVVLKFI) form an autoinhibitory domain region. EF-hand domains follow at residues 332–367 (EEIK…LGSN), 368–403 (LSKT…RYKL), 404–439 (DRDE…DGAG), and 444–474 (IKQI…ESSL). Aspartate 345, aspartate 347, serine 349, asparagine 351, glutamate 356, aspartate 381, aspartate 383, asparagine 385, threonine 387, glutamate 392, aspartate 417, aspartate 419, aspartate 421, histidine 423, glutamate 428, aspartate 452, aspartate 454, aspartate 456, lysine 458, and glutamate 463 together coordinate Ca(2+).

Belongs to the protein kinase superfamily. Ser/Thr protein kinase family. CDPK subfamily.

The protein localises to the membrane. The catalysed reaction is L-seryl-[protein] + ATP = O-phospho-L-seryl-[protein] + ADP + H(+). The enzyme catalyses L-threonyl-[protein] + ATP = O-phospho-L-threonyl-[protein] + ADP + H(+). Activated by calcium. Autophosphorylation may play an important role in the regulation of the kinase activity. In terms of biological role, may play a role in signal transduction pathways that involve calcium as a second messenger. The chain is Calcium-dependent protein kinase 27 (CPK27) from Arabidopsis thaliana (Mouse-ear cress).